The primary structure comprises 424 residues: tRNA(Ile)-lysidine synthase (424 aa).

26–31 (SGGIDS) serves as a coordination point for ATP.

It belongs to the tRNA(Ile)-lysidine synthase family.

The protein localises to the cytoplasm. The enzyme catalyses cytidine(34) in tRNA(Ile2) + L-lysine + ATP = lysidine(34) in tRNA(Ile2) + AMP + diphosphate + H(+). In terms of biological role, ligates lysine onto the cytidine present at position 34 of the AUA codon-specific tRNA(Ile) that contains the anticodon CAU, in an ATP-dependent manner. Cytidine is converted to lysidine, thus changing the amino acid specificity of the tRNA from methionine to isoleucine. The protein is tRNA(Ile)-lysidine synthase of Streptococcus agalactiae serotype V (strain ATCC BAA-611 / 2603 V/R).